Here is a 157-residue protein sequence, read N- to C-terminus: Endoribonuclease YbeY (157 aa).

Residues His-121, His-125, and Asp-131 each contribute to the Zn(2+) site.

This sequence belongs to the endoribonuclease YbeY family. Zn(2+) serves as cofactor.

It is found in the cytoplasm. In terms of biological role, single strand-specific metallo-endoribonuclease involved in late-stage 70S ribosome quality control and in maturation of the 3' terminus of the 16S rRNA. This Salinibacter ruber (strain DSM 13855 / M31) protein is Endoribonuclease YbeY.